A 149-amino-acid polypeptide reads, in one-letter code: Lipoprotein signal peptidase (149 aa).

3 helical membrane-spanning segments follow: residues 24–44, 57–77, and 81–101; these read SHIA…LTNL, KMWF…YLLW, and GKWL…GNFI. Residues Asp-111 and Asp-127 contribute to the active site. Residues 122–142 traverse the membrane as a helical segment; it reads IFNFADSCLTVGVIFILIGVL.

It belongs to the peptidase A8 family.

Its subcellular location is the cell membrane. It catalyses the reaction Release of signal peptides from bacterial membrane prolipoproteins. Hydrolyzes -Xaa-Yaa-Zaa-|-(S,diacylglyceryl)Cys-, in which Xaa is hydrophobic (preferably Leu), and Yaa (Ala or Ser) and Zaa (Gly or Ala) have small, neutral side chains.. The protein operates within protein modification; lipoprotein biosynthesis (signal peptide cleavage). In terms of biological role, this protein specifically catalyzes the removal of signal peptides from prolipoproteins. In Lactiplantibacillus plantarum (strain ATCC BAA-793 / NCIMB 8826 / WCFS1) (Lactobacillus plantarum), this protein is Lipoprotein signal peptidase.